Reading from the N-terminus, the 379-residue chain is S-adenosylmethionine synthase (379 aa).

Histidine 15 contacts ATP. Aspartate 17 is a Mg(2+) binding site. Glutamate 43 lines the K(+) pocket. Positions 56 and 99 each coordinate L-methionine. The segment at 99–109 (QSPDITQGVDR) is flexible loop. ATP-binding positions include 164 to 166 (DAK), 230 to 231 (RF), aspartate 239, 245 to 246 (RK), alanine 262, and lysine 266. L-methionine is bound at residue aspartate 239. Position 270 (lysine 270) interacts with L-methionine.

Belongs to the AdoMet synthase family. Homotetramer; dimer of dimers. The cofactor is Mg(2+). K(+) serves as cofactor.

The protein localises to the cytoplasm. The catalysed reaction is L-methionine + ATP + H2O = S-adenosyl-L-methionine + phosphate + diphosphate. It functions in the pathway amino-acid biosynthesis; S-adenosyl-L-methionine biosynthesis; S-adenosyl-L-methionine from L-methionine: step 1/1. Its function is as follows. Catalyzes the formation of S-adenosylmethionine (AdoMet) from methionine and ATP. The overall synthetic reaction is composed of two sequential steps, AdoMet formation and the subsequent tripolyphosphate hydrolysis which occurs prior to release of AdoMet from the enzyme. The protein is S-adenosylmethionine synthase of Buchnera aphidicola subsp. Schizaphis graminum (strain Sg).